Reading from the N-terminus, the 475-residue chain is MKHIVKNIHFVGIGGAGMSGIAEVLLNLGYKVSGSDVGSNAATRRLASLGATVMHGHDAANIAGANAVVVSTAVSGDNPEVLAARSKRIPVVPRAVMLAELMRLKQGVAIAGTHGKTTTTSLVASVLAEGGLDPTFVIGGRLNSAGANARLGTGDFIVAEADESDASFLNLFPVIEVITNIDADHMDTYGHDFARLKQAFIEFTQRLPFYGIAVLCVDDPNVREILPFVSKPVVRYGFAEDAQIRAVNARAVDGQMHFTVLRHLNGHAEPPLDVVLNLPGLHNVQNALAAIAIATELEVPDAAIVKALREFHGVGRRFQRYGEVATADGTGTFTLVDDYGHHPVEMAATLSAARGAFPGRRLVLAFQPHRFTRTRDCFEDFVKVLGTVDALLLAEVYAAGEAPIVAADGRALTRALRVAAKVEPVFVEQMEEMPQAIMNAARPGDVVVTMGAGSIGAVPGQVVSHQQPLQAGGAA.

Residue glycine 112–threonine 118 participates in ATP binding.

Belongs to the MurCDEF family.

The protein localises to the cytoplasm. It carries out the reaction UDP-N-acetyl-alpha-D-muramate + L-alanine + ATP = UDP-N-acetyl-alpha-D-muramoyl-L-alanine + ADP + phosphate + H(+). Its pathway is cell wall biogenesis; peptidoglycan biosynthesis. Functionally, cell wall formation. This chain is UDP-N-acetylmuramate--L-alanine ligase, found in Cupriavidus pinatubonensis (strain JMP 134 / LMG 1197) (Cupriavidus necator (strain JMP 134)).